The sequence spans 196 residues: ATP-dependent Clp protease proteolytic subunit (196 aa).

Catalysis depends on S101, which acts as the Nucleophile. H126 is a catalytic residue.

This sequence belongs to the peptidase S14 family. In terms of assembly, component of the chloroplastic Clp protease core complex.

Its subcellular location is the plastid. The protein resides in the chloroplast stroma. The catalysed reaction is Hydrolysis of proteins to small peptides in the presence of ATP and magnesium. alpha-casein is the usual test substrate. In the absence of ATP, only oligopeptides shorter than five residues are hydrolyzed (such as succinyl-Leu-Tyr-|-NHMec, and Leu-Tyr-Leu-|-Tyr-Trp, in which cleavage of the -Tyr-|-Leu- and -Tyr-|-Trp bonds also occurs).. Its function is as follows. Cleaves peptides in various proteins in a process that requires ATP hydrolysis. Has a chymotrypsin-like activity. Plays a major role in the degradation of misfolded proteins. The sequence is that of ATP-dependent Clp protease proteolytic subunit from Gossypium barbadense (Sea Island cotton).